Here is a 674-residue protein sequence, read N- to C-terminus: Amino-acid acetyltransferase, mitochondrial (674 aa).

The N-terminal 50 residues, 1–50, are a transit peptide targeting the mitochondrion; it reads MPLVAAMLTRSNGAWKKATSVVQASICRDQQRPNHTTITSVTSVSQRRHF. A compositionally biased stretch (polar residues) spans 33 to 45; that stretch reads PNHTTITSVTSVS. The interval 33–74 is disordered; sequence PNHTTITSVTSVSQRRHFSSAENGAKPSRSHPSAAEAKQKRE. Residues 497 to 665 enclose the N-acetyltransferase domain; sequence GTPRLKLTDT…YEDVCRGVVP (169 aa).

Belongs to the acetyltransferase family.

It localises to the mitochondrion. The enzyme catalyses L-glutamate + acetyl-CoA = N-acetyl-L-glutamate + CoA + H(+). Its pathway is amino-acid biosynthesis; L-arginine biosynthesis; N(2)-acetyl-L-ornithine from L-glutamate: step 1/4. N-acetylglutamate synthase involved in arginine biosynthesis. In Podospora anserina (strain S / ATCC MYA-4624 / DSM 980 / FGSC 10383) (Pleurage anserina), this protein is Amino-acid acetyltransferase, mitochondrial (ARG2).